Here is a 361-residue protein sequence, read N- to C-terminus: Nicotinate-nucleotide--dimethylbenzimidazole phosphoribosyltransferase (361 aa).

Residue glutamate 320 is the Proton acceptor of the active site.

Belongs to the CobT family. In terms of assembly, homodimer.

The enzyme catalyses 5,6-dimethylbenzimidazole + nicotinate beta-D-ribonucleotide = alpha-ribazole 5'-phosphate + nicotinate + H(+). It participates in nucleoside biosynthesis; alpha-ribazole biosynthesis; alpha-ribazole from 5,6-dimethylbenzimidazole: step 1/2. Functionally, catalyzes the synthesis of alpha-ribazole-5'-phosphate from nicotinate mononucleotide (NAMN) and 5,6-dimethylbenzimidazole (DMB). This chain is Nicotinate-nucleotide--dimethylbenzimidazole phosphoribosyltransferase, found in Shigella boydii serotype 18 (strain CDC 3083-94 / BS512).